We begin with the raw amino-acid sequence, 481 residues long: Aspartyl/glutamyl-tRNA(Asn/Gln) amidotransferase subunit B (481 aa).

The protein belongs to the GatB/GatE family. GatB subfamily. Heterotrimer of A, B and C subunits.

The enzyme catalyses L-glutamyl-tRNA(Gln) + L-glutamine + ATP + H2O = L-glutaminyl-tRNA(Gln) + L-glutamate + ADP + phosphate + H(+). The catalysed reaction is L-aspartyl-tRNA(Asn) + L-glutamine + ATP + H2O = L-asparaginyl-tRNA(Asn) + L-glutamate + ADP + phosphate + 2 H(+). In terms of biological role, allows the formation of correctly charged Asn-tRNA(Asn) or Gln-tRNA(Gln) through the transamidation of misacylated Asp-tRNA(Asn) or Glu-tRNA(Gln) in organisms which lack either or both of asparaginyl-tRNA or glutaminyl-tRNA synthetases. The reaction takes place in the presence of glutamine and ATP through an activated phospho-Asp-tRNA(Asn) or phospho-Glu-tRNA(Gln). This chain is Aspartyl/glutamyl-tRNA(Asn/Gln) amidotransferase subunit B, found in Ectopseudomonas mendocina (strain ymp) (Pseudomonas mendocina).